The primary structure comprises 203 residues: Large ribosomal subunit protein bL25 (203 aa).

The protein belongs to the bacterial ribosomal protein bL25 family. CTC subfamily. In terms of assembly, part of the 50S ribosomal subunit; part of the 5S rRNA/L5/L18/L25 subcomplex. Contacts the 5S rRNA. Binds to the 5S rRNA independently of L5 and L18.

Its function is as follows. This is one of the proteins that binds to the 5S RNA in the ribosome where it forms part of the central protuberance. This is Large ribosomal subunit protein bL25 from Cereibacter sphaeroides (strain ATCC 17025 / ATH 2.4.3) (Rhodobacter sphaeroides).